We begin with the raw amino-acid sequence, 247 residues long: ATP synthase subunit a, chloroplastic (247 aa).

5 helical membrane-spanning segments follow: residues 38–58 (QVLITSWVVIAILLGSAAIAV), 95–115 (VPFIGTMFLFIFVSNWSGALL), 134–154 (INTTVALALPTSVAYFYAGLT), 199–219 (LVVVVLVSLVPSVVPIPVMFL), and 220–240 (GLFTSSIQALIFATLAAAYIG).

This sequence belongs to the ATPase A chain family. F-type ATPases have 2 components, CF(1) - the catalytic core - and CF(0) - the membrane proton channel. CF(1) has five subunits: alpha(3), beta(3), gamma(1), delta(1), epsilon(1). CF(0) has four main subunits: a, b, b' and c.

It is found in the plastid. It localises to the chloroplast thylakoid membrane. Functionally, key component of the proton channel; it plays a direct role in the translocation of protons across the membrane. In Illicium oligandrum (Star anise), this protein is ATP synthase subunit a, chloroplastic.